We begin with the raw amino-acid sequence, 385 residues long: UDP-4-amino-4-deoxy-L-arabinose--oxoglutarate aminotransferase (385 aa).

The active-site Proton acceptor is Lys-188. Lys-188 bears the N6-(pyridoxal phosphate)lysine mark.

This sequence belongs to the DegT/DnrJ/EryC1 family. ArnB subfamily. As to quaternary structure, homodimer. Pyridoxal 5'-phosphate is required as a cofactor.

It carries out the reaction UDP-4-amino-4-deoxy-beta-L-arabinose + 2-oxoglutarate = UDP-beta-L-threo-pentopyranos-4-ulose + L-glutamate. The protein operates within nucleotide-sugar biosynthesis; UDP-4-deoxy-4-formamido-beta-L-arabinose biosynthesis; UDP-4-deoxy-4-formamido-beta-L-arabinose from UDP-alpha-D-glucuronate: step 2/3. It participates in bacterial outer membrane biogenesis; lipopolysaccharide biosynthesis. With respect to regulation, inhibited by L-cycloserine. Its function is as follows. Catalyzes the conversion of UDP-4-keto-arabinose (UDP-Ara4O) to UDP-4-amino-4-deoxy-L-arabinose (UDP-L-Ara4N). The modified arabinose is attached to lipid A and is required for resistance to polymyxin and cationic antimicrobial peptides. The sequence is that of UDP-4-amino-4-deoxy-L-arabinose--oxoglutarate aminotransferase (arnB) from Salmonella typhimurium (strain LT2 / SGSC1412 / ATCC 700720).